The chain runs to 204 residues: MMRTLITTHPLLLLLLLQQLLQPVQLQEVDTDFDSPDDEMEELEEYLEEFQSTGPTRPPTKENVERRVIIEPGMPLYDRDYCNEEIKRKNVYHKYRCVTEHYFLLMQYDELQKICYNRFVPCKNGVRKCNRSKGLVEGVYCNLTEALEIPGCEYKSFYRTGYVLITCAWQNEIHKLIPHTINDLVEPPKHRSFLNEDGVFVIPP.

The N-terminal stretch at 1–26 (MMRTLITTHPLLLLLLLQQLLQPVQL) is a signal peptide. Disulfide bonds link C97–C152, C115–C167, and C122–C129. N130 and N142 each carry an N-linked (GlcNAc...) asparagine glycan.

The protein belongs to the pancreatic ribonuclease family.

The protein resides in the secreted. Its function is as follows. Does not exhibit any ribonuclease activity. The protein is Inactive ribonuclease-like protein 9 (RNASE9) of Chlorocebus aethiops (Green monkey).